The sequence spans 316 residues: Metal tolerance protein 8 (316 aa).

At 1-15 the chain is on the cytoplasmic side; sequence MGPVRHILNERKSRK. A helical transmembrane segment spans residues 16-36; the sequence is IAAFLLINTAYMFVEFTSGFM. Topologically, residues 37 to 45 are vacuolar; it reads SDSLGLISD. The helical transmembrane segment at 46-66 threads the bilayer; sequence ACHMLFDCAALAIGLYASYIA. Residues 67 to 80 lie on the Cytoplasmic side of the membrane; sequence RLPANGLYNYGRGR. The chain crosses the membrane as a helical span at residues 81–101; that stretch reads FEVLSGYVNAVFLVLVGALIV. Over 102–116 the chain is Vacuolar; the sequence is LESFERILEPREIST. Residues 117-137 traverse the membrane as a helical segment; it reads SSLLTVSIGGLVVNVIGLVFF. Residues 138 to 176 lie on the Cytoplasmic side of the membrane; the sequence is HEEHHHAHGEAHSCNGGLQSSENHNKSRNRHHIDHNMEG. The segment at 147-166 is disordered; that stretch reads EAHSCNGGLQSSENHNKSRN. Residues 177-197 form a helical membrane-spanning segment; sequence IFLHVLADTMGSVGVVISTLL. At 198–202 the chain is on the vacuolar side; that stretch reads IKYKG. The chain crosses the membrane as a helical span at residues 203 to 223; that stretch reads WLIADPICSVFISIMIVSSVL. The Cytoplasmic portion of the chain corresponds to 224 to 316; it reads PLLRNSAEIL…LTIQIECVKR (93 aa).

This sequence belongs to the cation diffusion facilitator (CDF) transporter (TC 2.A.4) family. SLC30A subfamily.

The protein localises to the vacuole membrane. In terms of biological role, involved in sequestration of excess metal in the cytoplasm into vacuoles to maintain metal homeostasis. In Oryza sativa subsp. japonica (Rice), this protein is Metal tolerance protein 8 (MTP8).